We begin with the raw amino-acid sequence, 235 residues long: Small ribosomal subunit protein uS2 (235 aa).

Belongs to the universal ribosomal protein uS2 family.

The chain is Small ribosomal subunit protein uS2 (rpsB) from Geobacillus stearothermophilus (Bacillus stearothermophilus).